A 470-amino-acid chain; its full sequence is Glucose-1-phosphate adenylyltransferase (470 aa).

Residues Gly-164, Glu-181–Lys-182, and Ser-199 each bind alpha-D-glucose 1-phosphate.

It belongs to the bacterial/plant glucose-1-phosphate adenylyltransferase family. In terms of assembly, homotetramer.

The enzyme catalyses alpha-D-glucose 1-phosphate + ATP + H(+) = ADP-alpha-D-glucose + diphosphate. Its pathway is glycan biosynthesis; glycogen biosynthesis. Functionally, involved in the biosynthesis of ADP-glucose, a building block required for the elongation reactions to produce glycogen. Catalyzes the reaction between ATP and alpha-D-glucose 1-phosphate (G1P) to produce pyrophosphate and ADP-Glc. This Pseudarthrobacter chlorophenolicus (strain ATCC 700700 / DSM 12829 / CIP 107037 / JCM 12360 / KCTC 9906 / NCIMB 13794 / A6) (Arthrobacter chlorophenolicus) protein is Glucose-1-phosphate adenylyltransferase.